The primary structure comprises 399 residues: UDP-N-acetylglucosamine--N-acetylmuramyl-(pentapeptide) pyrophosphoryl-undecaprenol N-acetylglucosamine transferase (399 aa).

UDP-N-acetyl-alpha-D-glucosamine is bound by residues 29–31 (TAG), Asn148, Arg185, Ser219, and Gln318.

The protein belongs to the glycosyltransferase 28 family. MurG subfamily.

Its subcellular location is the cell membrane. It carries out the reaction di-trans,octa-cis-undecaprenyl diphospho-N-acetyl-alpha-D-muramoyl-L-alanyl-D-glutamyl-meso-2,6-diaminopimeloyl-D-alanyl-D-alanine + UDP-N-acetyl-alpha-D-glucosamine = di-trans,octa-cis-undecaprenyl diphospho-[N-acetyl-alpha-D-glucosaminyl-(1-&gt;4)]-N-acetyl-alpha-D-muramoyl-L-alanyl-D-glutamyl-meso-2,6-diaminopimeloyl-D-alanyl-D-alanine + UDP + H(+). The protein operates within cell wall biogenesis; peptidoglycan biosynthesis. In terms of biological role, cell wall formation. Catalyzes the transfer of a GlcNAc subunit on undecaprenyl-pyrophosphoryl-MurNAc-pentapeptide (lipid intermediate I) to form undecaprenyl-pyrophosphoryl-MurNAc-(pentapeptide)GlcNAc (lipid intermediate II). The chain is UDP-N-acetylglucosamine--N-acetylmuramyl-(pentapeptide) pyrophosphoryl-undecaprenol N-acetylglucosamine transferase from Mycobacterium ulcerans (strain Agy99).